Consider the following 402-residue polypeptide: Caspase-1 (402 aa).

In terms of domain architecture, CARD spans M1 to S91. Residues M1–L118 constitute a propeptide that is removed on maturation. Active-site residues include H236 and C284. The propeptide occupies S297–D314. S301 carries the post-translational modification Phosphoserine.

This sequence belongs to the peptidase C14A family. As to quaternary structure, heterotetramer that consists of two anti-parallel arranged heterodimers, each one formed by a 20 kDa (Caspase-1 subunit p20) and a 10 kDa (Caspase-1 subunit p10) subunit. May be a component of the inflammasome, a protein complex which also includes PYCARD, CARD8 and NLRP2 and whose function would be the activation of pro-inflammatory caspases. Component of the AIM2 PANoptosome complex, a multiprotein complex that drives inflammatory cell death (PANoptosis). Both the p10 and p20 subunits interact with MEFV. Interacts with CARD17P/INCA and CARD18. Interacts with SERPINB1; this interaction regulates CASP1 activity. Heterotetramer that consists of two anti-parallel arranged heterodimers, each one formed by a 20 kDa (Caspase-1 subunit p20) and a 10 kDa (Caspase-1 subunit p10) subunit. The two subunits are derived from the precursor sequence by an autocatalytic mechanism. Post-translationally, ubiquitinated via 'Lys-11'-linked polyubiquitination. Deubiquitinated by USP8.

The protein localises to the cytoplasm. Its subcellular location is the cell membrane. It catalyses the reaction Strict requirement for an Asp residue at position P1 and has a preferred cleavage sequence of Tyr-Val-Ala-Asp-|-.. Thiol protease involved in a variety of inflammatory processes by proteolytically cleaving other proteins, such as the precursors of the inflammatory cytokines interleukin-1 beta (IL1B) and interleukin 18 (IL18) as well as the pyroptosis inducer Gasdermin-D (GSDMD), into active mature peptides. Plays a key role in cell immunity as an inflammatory response initiator: once activated through formation of an inflammasome complex, it initiates a pro-inflammatory response through the cleavage of the two inflammatory cytokines IL1B and IL18, releasing the mature cytokines which are involved in a variety of inflammatory processes. Cleaves a tetrapeptide after an Asp residue at position P1. Also initiates pyroptosis, a programmed lytic cell death pathway, through cleavage of GSDMD. In contrast to cleavage of interleukin IL1B, recognition and cleavage of GSDMD is not strictly dependent on the consensus cleavage site but depends on an exosite interface on CASP1 that recognizes and binds the Gasdermin-D, C-terminal (GSDMD-CT) part. Cleaves and activates CASP7 in response to bacterial infection, promoting plasma membrane repair. Upon inflammasome activation, during DNA virus infection but not RNA virus challenge, controls antiviral immunity through the cleavage of CGAS, rendering it inactive. In apoptotic cells, cleaves SPHK2 which is released from cells and remains enzymatically active extracellularly. The protein is Caspase-1 (Casp1) of Rattus norvegicus (Rat).